Here is a 213-residue protein sequence, read N- to C-terminus: Alkylbase DNA glycosidase-like protein mag2 (213 aa).

Residues Lys53, Leu54, Ser61, His91, Gly94, Ser96, Lys97, Lys99, Glu102, Lys137, Gly138, Lys140, Thr143, Ser163, and Thr164 each coordinate DNA.

This sequence belongs to the alkylbase DNA glycosidase AlkA family.

The protein resides in the nucleus. Alkylbase DNA glycosidase-like protein that shows no DNA glycosylase activity for alkylated bases. The molecular role of mag2 appears to be abasic (AP) site recognition and protection, while possibly facilitating damage signaling by structurally sculpting the DNA substrate. Stimulates AP site binding to mismatch repair protein mutS. In Schizosaccharomyces pombe (strain 972 / ATCC 24843) (Fission yeast), this protein is Alkylbase DNA glycosidase-like protein mag2.